The sequence spans 440 residues: Serine/threonine-protein kinase VRK1 (440 aa).

In terms of domain architecture, Protein kinase spans 37–317; sequence WKLGLPIGQG…LLEYTEKPLY (281 aa). ATP contacts are provided by residues 43–51 and K71; that span reads IGQGGFGCI. A Glycyl lysine isopeptide (Lys-Gly) (interchain with G-Cter in SUMO2) cross-link involves residue K71. D177 (proton acceptor) is an active-site residue. S342 is modified (phosphoserine; by PLK3). S376 is subject to Phosphoserine. T378 is modified (phosphothreonine). 2 stretches are compositionally biased toward polar residues: residues 379–391 and 398–410; these read QVQEAAQTRSVES and SMSQPAAGCSSSD. Residues 379-440 form a disordered region; sequence QVQEAAQTRS…GSRTRKKAQK (62 aa). The required for interaction with the nucleosome stretch occupies residues 387–393; it reads RSVESQG.

It belongs to the protein kinase superfamily. CK1 Ser/Thr protein kinase family. VRK subfamily. Interacts with HDAC1, KAT2B, SETDB1, KDM3A and KDM4A. Associates with the nucleosome through interactions with nucleosome DNA, histone H2A and histone H2B; the interaction with H2A and H2B is mediated by the nucleosome acidic patch, a cluster of negatively charged residues of H2A and H2B forming a cleft within the nucleosome core. Post-translationally, autophosphorylated at various serine and threonine residues. Autophosphorylation does not impair its ability to phosphorylate p53/TP53. Phosphorylation by PLK3 leads to induction of Golgi fragmentation during mitosis. In terms of tissue distribution, highly expressed in testis. Expressed in liver, kidney and muscle. Weakly expressed in thymus, bone marrow and spleen.

The protein resides in the nucleus. The protein localises to the cytoplasm. It localises to the cajal body. It catalyses the reaction L-seryl-[protein] + ATP = O-phospho-L-seryl-[protein] + ADP + H(+). It carries out the reaction L-threonyl-[protein] + ATP = O-phospho-L-threonyl-[protein] + ADP + H(+). With respect to regulation, active in presence of Mn(2+), Mg(2+) and Zn(2+), but is not functional with Ca(2+) or Cu(2+). Has a higher affinity for Mn(2+) than for Mg(2+). RAN inhibits its autophosphorylation and its ability to phosphorylate histone H3. Its function is as follows. Serine/threonine kinase involved in the regulation of key cellular processes including the cell cycle, nuclear condensation, transcription regulation, and DNA damage response. Controls chromatin organization and remodeling by mediating phosphorylation of histone H3 on 'Thr-4' and histone H2AX (H2aXT4ph). It also phosphorylates KAT5 in response to DNA damage, promoting KAT5 association with chromatin and histone acetyltransferase activity. Is involved in the regulation of cell cycle progression of neural progenitors, and is required for proper cortical neuronal migration. Is involved in neurite elongation and branching in motor neurons, and has an essential role in Cajal bodies assembly, acting through COIL phosphorylation and the control of coilin degradation. Involved in Golgi disassembly during the cell cycle: following phosphorylation by PLK3 during mitosis, required to induce Golgi fragmentation. Phosphorylates BANF1: disrupts its ability to bind DNA, reduces its binding to LEM domain-containing proteins and causes its relocalization from the nucleus to the cytoplasm. Phosphorylates TP53BP1 and p53/TP53 on 'Thr-18', preventing the interaction between p53/TP53 and MDM2. Phosphorylates ATF2 which activates its transcriptional activity. Phosphorylates JUN. This Mus musculus (Mouse) protein is Serine/threonine-protein kinase VRK1.